The sequence spans 2824 residues: Highly reducing polyketide synthase stpks1 (2824 aa).

Residues 8 to 428 form the Ketosynthase family 3 (KS3) domain; it reads PKPVAVVGIS…GANGHVIAES (421 aa). Catalysis depends on for beta-ketoacyl synthase activity residues cysteine 177, histidine 312, and histidine 348. The malonyl-CoA:ACP transacylase (MAT) domain stretch occupies residues 517-854; the sequence is QLVFVFSGQG…LTAVGNLSTL (338 aa). The For malonyltransferase activity role is filled by serine 616. An N-terminal hotdog fold region spans residues 886 to 1004; sequence MPFYSESSEL…GFMTTEVMDK (119 aa). Residues 886–1168 form the PKS/mFAS DH domain; the sequence is MPFYSESSEL…SKHWTGAVPT (283 aa). The interval 894 to 1083 is dehydratase (DH) domain; it reads ELAVKMKRSR…PSLLDSCIHG (190 aa). Histidine 925 functions as the Proton acceptor; for dehydratase activity in the catalytic mechanism. The segment at 1018–1168 is C-terminal hotdog fold; that stretch reads TTPADISNLY…SKHWTGAVPT (151 aa). Catalysis depends on aspartate 1078, which acts as the Proton donor; for dehydratase activity. A methyltransferase (CMet) domain region spans residues 1101–1449; sequence PSHIGRVTLY…KFQVVDGAQD (349 aa). The disordered stretch occupies residues 1213-1232; the sequence is APPSANGHANGHANGSANGS. An enoyl reductase (ER) domain region spans residues 1518–1840; that stretch reads TGTFDGAVAT…LPSDFSVSQS (323 aa). The ketoreductase (KR) domain stretch occupies residues 1842–2096; it reads ALADDKTYLV…SESVLYNHLV (255 aa). Residues 2109–2196 enclose the Carrier domain; that stretch reads DPYEVLQEIV…TAVSTAEKPF (88 aa). The interval 2200 to 2414 is thioesterase (TE) domain; it reads AMHQPGQTIL…WASSDATTRM (215 aa). Positions 2608–2809 are methyltransferase (CMet) domain; the sequence is YRQNKVFTSM…ATGYSNVQVC (202 aa).

The protein operates within mycotoxin biosynthesis. Highly reducing polyketide synthase; part of the gene cluster that mediates the biosynthesis of strobilurin A, an antifungal polyketide that contains a key beta-methoxyacrylate toxophore that targets the complex III of the mitochondrial electron transport chain. Strobilurin biosynthesis begins with construction of benzoyl CoA by step-wise elimination of ammonia from phenylalanine by the phenylalanine ammonia-lyase str11, oxygenation by str8 and retro-Claisen reaction to form benzoic acid, which is activated to its CoA thiolester benzoyl CoA by the dedicated CoA ligase str10. Benzoyl CoA forms the starter unit for the highly reducing polyketide synthase stpks1 that produces the polyketide prestrobilutin A. The FAD-dependent oxygenase str9 then catalyzes the key oxidative rearrangement responsible for the creation of the beta-methoxyacrylate toxophore. Str9 performs epoxidation of the 2,3 olefin of prestrobilutin A, followed by Meinwald rearrangement to furnish the aldehyde intermediate. Rapid enolization of the aldehyde intermediate would give the beta-methoxyacrylate skeleton and methylations catalyzed by str2 and str3 complete the synthesis and lead to the production of strobilurin A. The short-chain dehydrogenase stl2 and the dehydrogenase str4 play a role in the shunt pathway leading to the production of bolineol. The cluster encodes no obvious halogenase gene that could be involved in production of strobilurin B, nor any obvious dimethylallyl-transferase that could be involved in the production of strobilurin G. It is possible that unknown proteins encoded in, or near, the cluster (such as str1 or stl1) may form new classes of halogenases or dimethylally-transferases, or that the responsible genes are located elsewhere on the genome. Similarly, proteins encoded by str5/str6 hydrolases appear to have no chemical role in the biosynthesis of strobilurin A. Finally, no obvious self-resistance gene is found within the cluster. The polypeptide is Highly reducing polyketide synthase stpks1 (Strobilurus tenacellus).